The primary structure comprises 184 residues: Large ribosomal subunit protein bL9 (184 aa).

Residues 160–184 (LQNQKSEQQEAEQDANKEATDGDDS) form a disordered region. Residues 173 to 184 (DANKEATDGDDS) show a composition bias toward basic and acidic residues.

This sequence belongs to the bacterial ribosomal protein bL9 family.

In terms of biological role, binds to the 23S rRNA. The polypeptide is Large ribosomal subunit protein bL9 (Wolbachia pipientis wMel).